The following is a 289-amino-acid chain: WUSCHEL-related homeobox 1 (289 aa).

Residues 1–11 show a composition bias toward low complexity; it reads MDHMQQQQRQQ. The disordered stretch occupies residues 1–34; it reads MDHMQQQQRQQVGGGGGEEVAGRGGVPVCRPSGT. Residues 12–25 are compositionally biased toward gly residues; it reads VGGGGGEEVAGRGG. Residues 31-96 constitute a DNA-binding region (homeobox; WUS-type); that stretch reads PSGTRWTPTT…NHKARERQKK (66 aa).

It belongs to the WUS homeobox family. Interacts with TPR1, TPR2 and TPR3. As to expression, expressed in young leaf primordia. Expressed in branch an floral meristems. Transiently expressed in the shoot apex.

The protein localises to the nucleus. Functionally, transcription repressor required for the formation and development of tiller buds and panicles. Required for tiller formation and female sterility. Required for the early developmental stages of axillary meristem formation. Plays a role in maintaining the axillary premeristem zone and in promoting the formation of the axillary meristem by promoting OSH1 expression. Does not seem to be involved in maintenance of the shoot apical meristem (SAM). The chain is WUSCHEL-related homeobox 1 from Oryza sativa subsp. japonica (Rice).